Consider the following 144-residue polypeptide: DNA polymerase III subunit chi (144 aa).

This sequence belongs to the DNA polymerase III chi/HolC chain family. DNA polymerase III contains a core (composed of alpha, epsilon and theta chains) that associates with a tau subunit. This core dimerizes to form the POLIII' complex. PolIII' associates with the gamma complex (composed of gamma, delta, delta', psi and chi chains) and with the beta chain to form the complete DNA polymerase III complex. Interacts directly with the psi subunit (holD). The only subunit of the DNA polymerase III holoenzyme known to interact with single-stranded DNA binding protein (SSB), interacts directly with DNA helicase YoaA.

The enzyme catalyses DNA(n) + a 2'-deoxyribonucleoside 5'-triphosphate = DNA(n+1) + diphosphate. Functionally, part of the beta sliding clamp loading complex, which hydrolyzes ATP to load the beta clamp onto primed DNA to form the DNA replication pre-initiation complex. DNA polymerase III is a complex, multichain enzyme responsible for most of the replicative synthesis in bacteria. This DNA polymerase also exhibits 3' to 5' exonuclease activity. This subunit may stabilize YoaA and/or stimulate the helicase activity of YoaA. This Haemophilus influenzae (strain ATCC 51907 / DSM 11121 / KW20 / Rd) protein is DNA polymerase III subunit chi (holC).